A 377-amino-acid chain; its full sequence is Queuine tRNA-ribosyltransferase (377 aa).

Asp93 (proton acceptor) is an active-site residue. Substrate-binding positions include 93 to 97, Asp147, Gln191, and Gly218; that span reads DSGGF. Positions 249-255 are RNA binding; that stretch reads GVGTPLD. The Nucleophile role is filled by Asp268. The segment at 273 to 277 is RNA binding; important for wobble base 34 recognition; that stretch reads TRNAR. Zn(2+) contacts are provided by Cys306, Cys308, Cys311, and His337.

It belongs to the queuine tRNA-ribosyltransferase family. As to quaternary structure, homodimer. Within each dimer, one monomer is responsible for RNA recognition and catalysis, while the other monomer binds to the replacement base PreQ1. The cofactor is Zn(2+).

The catalysed reaction is 7-aminomethyl-7-carbaguanine + guanosine(34) in tRNA = 7-aminomethyl-7-carbaguanosine(34) in tRNA + guanine. Its pathway is tRNA modification; tRNA-queuosine biosynthesis. Functionally, catalyzes the base-exchange of a guanine (G) residue with the queuine precursor 7-aminomethyl-7-deazaguanine (PreQ1) at position 34 (anticodon wobble position) in tRNAs with GU(N) anticodons (tRNA-Asp, -Asn, -His and -Tyr). Catalysis occurs through a double-displacement mechanism. The nucleophile active site attacks the C1' of nucleotide 34 to detach the guanine base from the RNA, forming a covalent enzyme-RNA intermediate. The proton acceptor active site deprotonates the incoming PreQ1, allowing a nucleophilic attack on the C1' of the ribose to form the product. After dissociation, two additional enzymatic reactions on the tRNA convert PreQ1 to queuine (Q), resulting in the hypermodified nucleoside queuosine (7-(((4,5-cis-dihydroxy-2-cyclopenten-1-yl)amino)methyl)-7-deazaguanosine). In Oleidesulfovibrio alaskensis (strain ATCC BAA-1058 / DSM 17464 / G20) (Desulfovibrio alaskensis), this protein is Queuine tRNA-ribosyltransferase.